The chain runs to 306 residues: UDP-3-O-acyl-N-acetylglucosamine deacetylase (306 aa).

Zn(2+)-binding residues include His-79, His-239, and Asp-243. His-266 (proton donor) is an active-site residue.

This sequence belongs to the LpxC family. Zn(2+) serves as cofactor.

The enzyme catalyses a UDP-3-O-[(3R)-3-hydroxyacyl]-N-acetyl-alpha-D-glucosamine + H2O = a UDP-3-O-[(3R)-3-hydroxyacyl]-alpha-D-glucosamine + acetate. The protein operates within glycolipid biosynthesis; lipid IV(A) biosynthesis; lipid IV(A) from (3R)-3-hydroxytetradecanoyl-[acyl-carrier-protein] and UDP-N-acetyl-alpha-D-glucosamine: step 2/6. Catalyzes the hydrolysis of UDP-3-O-myristoyl-N-acetylglucosamine to form UDP-3-O-myristoylglucosamine and acetate, the committed step in lipid A biosynthesis. The chain is UDP-3-O-acyl-N-acetylglucosamine deacetylase from Haemophilus ducreyi (strain 35000HP / ATCC 700724).